The primary structure comprises 372 residues: MLDIQQLVKTYENGHQAVKGVDLAIHQGEFIVLVGPSGCGKSSILRSIAGLEAITSGEIHLAGRRVDNEKPANRDIAMVFQNYALYPHMSVYDNLAYGLKNRGVSKATIAEKIAKVAKTLKIEEYLDRKPAKLSGGQRQRVAMGRAIVRDPQLFLFDEPLSNLDAALRAHMRLEIKKLQRELGVTSVYVTHDQVEAMTLADRIVVLKQGEIEQIGTPAEVYHQPASTFVASFIGSPAMNFLAASIRDGKLQLAGKQWSVPYDANLNCNTLTLGIRPEHASLQPVDDAIELSINIQVVEPLGPNQLVHGKINGEYGDEDFIAVTAEMPLTIGDNLPIWVRVEQLHLFDEQEKRIPISAQSPSVDTRQQQRQQQ.

An ABC transporter domain is found at 2-233 (LDIQQLVKTY…PASTFVASFI (232 aa)). Position 35 to 42 (35 to 42 (GPSGCGKS)) interacts with ATP.

The protein belongs to the ABC transporter superfamily. sn-glycerol-3-phosphate importer (TC 3.A.1.1.3) family. In terms of assembly, the complex is composed of two ATP-binding proteins (UgpC), two transmembrane proteins (UgpA and UgpE) and a solute-binding protein (UgpB).

It is found in the cell inner membrane. It catalyses the reaction sn-glycerol 3-phosphate(out) + ATP + H2O = sn-glycerol 3-phosphate(in) + ADP + phosphate + H(+). Its function is as follows. Part of the ABC transporter complex UgpBAEC involved in sn-glycerol-3-phosphate (G3P) import. Responsible for energy coupling to the transport system. The polypeptide is sn-glycerol-3-phosphate import ATP-binding protein UgpC (Vibrio vulnificus (strain CMCP6)).